Consider the following 181-residue polypeptide: MRVVLLGPPGAGKGTQAQKLAEKLGIPQISTGELFRKNIQDGTKLGIEAKRYLDAGDLVPSDLTNQLVDDRLDQPDTAAGFILDGYPRSVEQAKALHEMLRRRDTDIDAVLEFRVSQDELLQRLKGRGRADDTDEVILNRMKVYRDETAPLLEFYDTEVKTVDAIGTLDEVFARALQALGK.

Residue 10–15 (GAGKGT) participates in ATP binding. An NMP region spans residues 30–59 (STGELFRKNIQDGTKLGIEAKRYLDAGDLV). AMP-binding positions include T31, R36, 57–59 (DLV), 85–88 (GYPR), and Q92. The segment at 126-132 (GRGRADD) is LID. R127 is an ATP binding site. Residues R129 and R140 each contribute to the AMP site. G166 serves as a coordination point for ATP.

The protein belongs to the adenylate kinase family. In terms of assembly, monomer.

Its subcellular location is the cytoplasm. The catalysed reaction is AMP + ATP = 2 ADP. It functions in the pathway purine metabolism; AMP biosynthesis via salvage pathway; AMP from ADP: step 1/1. Its function is as follows. Catalyzes the reversible transfer of the terminal phosphate group between ATP and AMP. Plays an important role in cellular energy homeostasis and in adenine nucleotide metabolism. This chain is Adenylate kinase, found in Mycobacterium marinum (strain ATCC BAA-535 / M).